A 503-amino-acid polypeptide reads, in one-letter code: Probable mitochondrial-processing peptidase subunit alpha-1, mitochondrial (503 aa).

The transit peptide at 1 to 59 (MYRTAASRARALKGVLTRSLRPARYASSSAVAETSSSTPAYLSWLSGGSRAALTSLDMP) directs the protein to the mitochondrion.

This sequence belongs to the peptidase M16 family. In terms of assembly, heterodimer of alpha and beta subunits, forming the mitochondrial processing protease (MPP) in which subunit alpha is involved in substrate recognition and binding and subunit beta is the catalytic subunit. Component of the ubiquinol-cytochrome c oxidoreductase (cytochrome b-c1 complex, complex III, CIII), a multisubunit enzyme composed of 10 subunits. The complex is composed of 3 respiratory subunits cytochrome b (MT-CYB), cytochrome c1 (CYC1-1 or CYC1-2) and Rieske protein (UCR1-1 or UCR1-2), 2 core protein subunits MPPalpha1 (or MPPalpha2) and MPPB, and 5 low-molecular weight protein subunits QCR7-1 (or QCR7-2), UCRQ-1 (or UCRQ-2), QCR9, UCRY and probably QCR6-1 (or QCR6-2). The complex exists as an obligatory dimer and forms supercomplexes (SCs) in the inner mitochondrial membrane with NADH-ubiquinone oxidoreductase (complex I, CI), resulting in different assemblies (supercomplexes SCI(1)III(2) and SCI(2)III(4)).

It localises to the mitochondrion matrix. The protein resides in the mitochondrion inner membrane. Substrate recognition and binding subunit of the essential mitochondrial processing protease (MPP), which cleaves the mitochondrial sequence off newly imported precursors proteins. Functionally, component of the ubiquinol-cytochrome c oxidoreductase, a multisubunit transmembrane complex that is part of the mitochondrial electron transport chain which drives oxidative phosphorylation. The respiratory chain contains 3 multisubunit complexes succinate dehydrogenase (complex II, CII), ubiquinol-cytochrome c oxidoreductase (cytochrome b-c1 complex, complex III, CIII) and cytochrome c oxidase (complex IV, CIV), that cooperate to transfer electrons derived from NADH and succinate to molecular oxygen, creating an electrochemical gradient over the inner membrane that drives transmembrane transport and the ATP synthase. The cytochrome b-c1 complex catalyzes electron transfer from ubiquinol to cytochrome c, linking this redox reaction to translocation of protons across the mitochondrial inner membrane, with protons being carried across the membrane as hydrogens on the quinol. In the process called Q cycle, 2 protons are consumed from the matrix, 4 protons are released into the intermembrane space and 2 electrons are passed to cytochrome c. In Arabidopsis thaliana (Mouse-ear cress), this protein is Probable mitochondrial-processing peptidase subunit alpha-1, mitochondrial (MPPalpha1).